Reading from the N-terminus, the 211-residue chain is MDRLASTSALNLARSLYEAGIRDEPVLKAVANTPRERFLDAALGHKAYENTALPIGQGQTISQPYIVARMTEILLQCQPQKVLEIGTGSGYQAAILAQLVPQLCTVERIKSLQIQARQRLKKLDLHNIAFKYGDGWQGWPSKGPYDAIMVTAAAASVPNALTEQLTDGGVLVIPVGEASQQLLKVTRKGNQYVSEAIEIVRFVPLINGELA.

Residue S62 is part of the active site.

The protein belongs to the methyltransferase superfamily. L-isoaspartyl/D-aspartyl protein methyltransferase family.

It localises to the cytoplasm. The catalysed reaction is [protein]-L-isoaspartate + S-adenosyl-L-methionine = [protein]-L-isoaspartate alpha-methyl ester + S-adenosyl-L-homocysteine. Functionally, catalyzes the methyl esterification of L-isoaspartyl residues in peptides and proteins that result from spontaneous decomposition of normal L-aspartyl and L-asparaginyl residues. It plays a role in the repair and/or degradation of damaged proteins. The chain is Protein-L-isoaspartate O-methyltransferase from Shewanella piezotolerans (strain WP3 / JCM 13877).